Here is a 482-residue protein sequence, read N- to C-terminus: Long chain base biosynthesis protein 1c (482 aa).

A helical membrane pass occupies residues 33 to 53 (FGIHIDGHLVVEGLLIAAILF).

The protein belongs to the class-II pyridoxal-phosphate-dependent aminotransferase family. As to quaternary structure, heterodimer with LCB2. Component of the serine palmitoyltransferase (SPT) complex, composed of LCB1 and LCB2. It depends on pyridoxal 5'-phosphate as a cofactor.

It localises to the endoplasmic reticulum membrane. The enzyme catalyses L-serine + hexadecanoyl-CoA + H(+) = 3-oxosphinganine + CO2 + CoA. Its pathway is lipid metabolism; sphingolipid metabolism. Serine palmitoyltransferase (SPT). The heterodimer formed with LCB2 constitutes the catalytic core. This Oryza sativa subsp. japonica (Rice) protein is Long chain base biosynthesis protein 1c.